A 126-amino-acid polypeptide reads, in one-letter code: Lymphocyte antigen 6 complex locus protein G6c (126 aa).

The N-terminal stretch at 1 to 19 (MKHLLLLTLSALLYCWVSA) is a signal peptide. Positions 21-112 (TRCHSCYKVP…PRPTPALALI (92 aa)) constitute a UPAR/Ly6 domain. Intrachain disulfides connect cysteine 23–cysteine 48, cysteine 26–cysteine 34, and cysteine 40–cysteine 66. Asparagine 89 is a glycosylation site (N-linked (GlcNAc...) (high mannose) asparagine). A disulfide bridge links cysteine 93 with cysteine 98. Serine 100 carries the GPI-anchor amidated serine lipid modification. Residues 101 to 126 (PAPRPTPALALISLTSLAGLGLWLLH) constitute a propeptide, removed in mature form.

As to quaternary structure, monomer. N-glycosylated. In terms of tissue distribution, highly expressed at the leading edges of cells, on filopodia.

The protein localises to the cell membrane. This is Lymphocyte antigen 6 complex locus protein G6c (Ly6g6c) from Mus musculus (Mouse).